Here is a 393-residue protein sequence, read N- to C-terminus: Arginine biosynthesis bifunctional protein ArgJ (393 aa).

Positions 142, 168, 179, 265, 388, and 393 each coordinate substrate. The active-site Nucleophile is Thr-179.

This sequence belongs to the ArgJ family. As to quaternary structure, heterotetramer of two alpha and two beta chains.

It localises to the cytoplasm. The enzyme catalyses N(2)-acetyl-L-ornithine + L-glutamate = N-acetyl-L-glutamate + L-ornithine. The catalysed reaction is L-glutamate + acetyl-CoA = N-acetyl-L-glutamate + CoA + H(+). Its pathway is amino-acid biosynthesis; L-arginine biosynthesis; L-ornithine and N-acetyl-L-glutamate from L-glutamate and N(2)-acetyl-L-ornithine (cyclic): step 1/1. It participates in amino-acid biosynthesis; L-arginine biosynthesis; N(2)-acetyl-L-ornithine from L-glutamate: step 1/4. Functionally, catalyzes two activities which are involved in the cyclic version of arginine biosynthesis: the synthesis of N-acetylglutamate from glutamate and acetyl-CoA as the acetyl donor, and of ornithine by transacetylation between N(2)-acetylornithine and glutamate. The polypeptide is Arginine biosynthesis bifunctional protein ArgJ (Geobacter sulfurreducens (strain ATCC 51573 / DSM 12127 / PCA)).